Reading from the N-terminus, the 284-residue chain is NADPH-dependent 7-cyano-7-deazaguanine reductase (284 aa).

91–93 (IES) serves as a coordination point for substrate. Residue 93 to 94 (SK) participates in NADPH binding. Cys-192 functions as the Thioimide intermediate in the catalytic mechanism. The active-site Proton donor is the Asp-199. 231 to 232 (HE) provides a ligand contact to substrate. Residue 260–261 (RG) participates in NADPH binding.

It belongs to the GTP cyclohydrolase I family. QueF type 2 subfamily. Homodimer.

Its subcellular location is the cytoplasm. It carries out the reaction 7-aminomethyl-7-carbaguanine + 2 NADP(+) = 7-cyano-7-deazaguanine + 2 NADPH + 3 H(+). The protein operates within tRNA modification; tRNA-queuosine biosynthesis. In terms of biological role, catalyzes the NADPH-dependent reduction of 7-cyano-7-deazaguanine (preQ0) to 7-aminomethyl-7-deazaguanine (preQ1). In Shewanella denitrificans (strain OS217 / ATCC BAA-1090 / DSM 15013), this protein is NADPH-dependent 7-cyano-7-deazaguanine reductase.